Consider the following 201-residue polypeptide: Orotate phosphoribosyltransferase (201 aa).

Residue 113 to 121 (EDIITTGKS) participates in 5-phospho-alpha-D-ribose 1-diphosphate binding. The orotate site is built by Thr-117 and Arg-145.

This sequence belongs to the purine/pyrimidine phosphoribosyltransferase family. PyrE subfamily. In terms of assembly, homodimer. The cofactor is Mg(2+).

It carries out the reaction orotidine 5'-phosphate + diphosphate = orotate + 5-phospho-alpha-D-ribose 1-diphosphate. It functions in the pathway pyrimidine metabolism; UMP biosynthesis via de novo pathway; UMP from orotate: step 1/2. Functionally, catalyzes the transfer of a ribosyl phosphate group from 5-phosphoribose 1-diphosphate to orotate, leading to the formation of orotidine monophosphate (OMP). This chain is Orotate phosphoribosyltransferase, found in Helicobacter pylori (strain ATCC 700392 / 26695) (Campylobacter pylori).